Consider the following 76-residue polypeptide: RNA-binding protein KhpA (76 aa).

The region spanning Ser29 to Asp76 is the KH domain.

Belongs to the KhpA RNA-binding protein family. As to quaternary structure, forms a complex with KhpB.

The protein resides in the cytoplasm. Its function is as follows. A probable RNA chaperone. Forms a complex with KhpB which binds to cellular RNA and controls its expression. Plays a role in peptidoglycan (PG) homeostasis and cell length regulation. In Halalkalibacterium halodurans (strain ATCC BAA-125 / DSM 18197 / FERM 7344 / JCM 9153 / C-125) (Bacillus halodurans), this protein is RNA-binding protein KhpA.